A 137-amino-acid polypeptide reads, in one-letter code: Peptide methionine sulfoxide reductase MsrB (137 aa).

The MsrB domain occupies 7-129 (AEELKKKLSE…NSASLAFSDE (123 aa)). The Zn(2+) site is built by Cys-46, Cys-49, Cys-95, and Cys-98. Cys-118 (nucleophile) is an active-site residue.

Belongs to the MsrB Met sulfoxide reductase family. Zn(2+) is required as a cofactor.

The catalysed reaction is L-methionyl-[protein] + [thioredoxin]-disulfide + H2O = L-methionyl-(R)-S-oxide-[protein] + [thioredoxin]-dithiol. The protein is Peptide methionine sulfoxide reductase MsrB of Salmonella arizonae (strain ATCC BAA-731 / CDC346-86 / RSK2980).